Consider the following 252-residue polypeptide: Type III pantothenate kinase (252 aa).

An ATP-binding site is contributed by 6 to 13; it reads DIGNTTTE. Substrate is bound by residues Tyr100 and 107–110; that span reads GADR. The active-site Proton acceptor is the Asp109. A K(+)-binding site is contributed by Asp129. Residue Thr132 coordinates ATP. Residue Thr184 participates in substrate binding.

The protein belongs to the type III pantothenate kinase family. As to quaternary structure, homodimer. NH4(+) is required as a cofactor. It depends on K(+) as a cofactor.

It localises to the cytoplasm. It carries out the reaction (R)-pantothenate + ATP = (R)-4'-phosphopantothenate + ADP + H(+). It participates in cofactor biosynthesis; coenzyme A biosynthesis; CoA from (R)-pantothenate: step 1/5. Its function is as follows. Catalyzes the phosphorylation of pantothenate (Pan), the first step in CoA biosynthesis. The chain is Type III pantothenate kinase from Sulfurihydrogenibium sp. (strain YO3AOP1).